The chain runs to 259 residues: LOB domain-containing protein CRL1 (259 aa).

Positions Ser6–Ala108 constitute an LOB domain.

The protein belongs to the LOB domain-containing protein family. As to quaternary structure, can form homodimers. In terms of tissue distribution, expressed in unelongating basal internodes, at the base of shoot in parenchyma cells adjacent to the peripheral vascular cylinder of the stem, and root pericycle cells. Expressed in lateral and adventitious root primordia, tiller primordia, vascular tissues, scutellum, and young pedicels.

It is found in the nucleus. Its function is as follows. Acts as a positive regulator of adventitious (crown) root formation by promoting its initiation. Acts as a positive regulator of lateral root formation. Regulated by the auxin response factor and transcriptional activator ARF23/ARF1. Involved in auxin-mediated cell dedifferentiation, and may promote the initial cell division in the pericycle cells adjacent to the peripheral vascular cylinder at the base of the stem. May act upstream of the gene regulatory network controlling adventitious root (crown) development. This chain is LOB domain-containing protein CRL1, found in Oryza sativa subsp. japonica (Rice).